The chain runs to 645 residues: Heat shock protein SSA2 (645 aa).

Ser-2 carries the N-acetylserine modification. The interval 581 to 645 is disordered; sequence ANQTATQEEF…NDGPTVEEVD (65 aa). Residues 611–621 show a composition bias toward low complexity; that stretch reads AGATPSGAAGA.

This sequence belongs to the heat shock protein 70 family. As to quaternary structure, binds human histatin-5, an antifungal peptide from saliva.

Its subcellular location is the cytoplasm. The protein localises to the secreted. It localises to the cell wall. In terms of biological role, heat shock protein that may play a role in the transport of polypeptides both across the mitochondrial membranes and into the endoplasmic reticulum. Acts as a highly immunodominant antigen. Plays a role in the sensitivity to, and the import of candidacidal beta-defensin peptides. HSP70/SSA1 and SSA2 bind histatin-5, a peptide from human saliva, and mediates its fungicidal activity. SSA2 facilitates fungicidal activity of Hst 5 in binding and intracellular translocation, whereas HSP70/SSA1 appears to have a lesser functional role in Hst 5 toxicity. The chain is Heat shock protein SSA2 from Candida albicans (strain SC5314 / ATCC MYA-2876) (Yeast).